A 155-amino-acid polypeptide reads, in one-letter code: Ribosome maturation factor RimP (155 aa).

Belongs to the RimP family.

It localises to the cytoplasm. Required for maturation of 30S ribosomal subunits. This chain is Ribosome maturation factor RimP, found in Dichelobacter nodosus (strain VCS1703A).